A 61-amino-acid polypeptide reads, in one-letter code: Small ribosomal subunit protein uS14B (61 aa).

The Zn(2+) site is built by C24, C27, C40, and C43.

This sequence belongs to the universal ribosomal protein uS14 family. Zinc-binding uS14 subfamily. In terms of assembly, part of the 30S ribosomal subunit. Contacts proteins S3 and S10. The cofactor is Zn(2+).

Its function is as follows. Binds 16S rRNA, required for the assembly of 30S particles and may also be responsible for determining the conformation of the 16S rRNA at the A site. The sequence is that of Small ribosomal subunit protein uS14B from Lacticaseibacillus paracasei (strain ATCC 334 / BCRC 17002 / CCUG 31169 / CIP 107868 / KCTC 3260 / NRRL B-441) (Lactobacillus paracasei).